A 106-amino-acid chain; its full sequence is RxLR effector protein PSR1 (106 aa).

An N-terminal signal peptide occupies residues 1-20; sequence MRLTYVLLVAVTTLLVSCDA. The RxLR-dEER motif lies at 33–46; sequence RLLRFVEAADEEER. The segment at 50–106 is WY domain; the sequence is FSPEKLRKMLGDETYRLKKFGKWDSDGHTFDGLKHYLLLSDSSMVKLRNMYKAWLEQ. The Bipartite nuclear localization signal (NLS) signature appears at 56 to 69; that stretch reads RKMLGDETYRLKKF.

The protein belongs to the RxLR effector family. As to quaternary structure, interacts with host PINP1.

It localises to the secreted. Its subcellular location is the host nucleus. Its function is as follows. Secreted effector that possesses RNA silencing suppression activity by inhibiting the biogenesis of small RNAs in the host plant to promote enhanced susceptibility of host to the pathogen during infection. Interferes with secondary siRNA production by associating with host nuclear protein PINP1 that acts as a regulator of the accumulation of both microRNAs and endogenous small interfering RNAs. This is RxLR effector protein PSR1 from Phytophthora sojae (Soybean stem and root rot agent).